A 434-amino-acid polypeptide reads, in one-letter code: Glutamate-1-semialdehyde 2,1-aminomutase 1 (434 aa).

At Lys-270 the chain carries N6-(pyridoxal phosphate)lysine.

It belongs to the class-III pyridoxal-phosphate-dependent aminotransferase family. HemL subfamily. In terms of assembly, homodimer. Requires pyridoxal 5'-phosphate as cofactor.

Its subcellular location is the cytoplasm. The enzyme catalyses (S)-4-amino-5-oxopentanoate = 5-aminolevulinate. The protein operates within porphyrin-containing compound metabolism; protoporphyrin-IX biosynthesis; 5-aminolevulinate from L-glutamyl-tRNA(Glu): step 2/2. In Bacillus cereus (strain AH187), this protein is Glutamate-1-semialdehyde 2,1-aminomutase 1.